Here is a 423-residue protein sequence, read N- to C-terminus: Glutamine synthetase, chloroplastic (423 aa).

Residues M1–V51 constitute a chloroplast transit peptide. The GS beta-grasp domain occupies V70–G150. The segment at R89–P115 is disordered. The GS catalytic domain maps to P154 to V423.

Belongs to the glutamine synthetase family. As to quaternary structure, homooctamer.

The protein localises to the plastid. It is found in the chloroplast. The catalysed reaction is L-glutamate + NH4(+) + ATP = L-glutamine + ADP + phosphate + H(+). The light-modulated chloroplast enzyme, encoded by a nuclear gene and expressed primarily in leaves, is responsible for the reassimilation of the ammonia generated by photorespiration. This chain is Glutamine synthetase, chloroplastic (GLN2), found in Zea mays (Maize).